The primary structure comprises 325 residues: tRNA U34 carboxymethyltransferase (325 aa).

Residues K91, W105, K110, G130, D152 to S154, M196, Y200, and R315 each bind carboxy-S-adenosyl-L-methionine.

The protein belongs to the class I-like SAM-binding methyltransferase superfamily. CmoB family. Homotetramer.

It catalyses the reaction carboxy-S-adenosyl-L-methionine + 5-hydroxyuridine(34) in tRNA = 5-carboxymethoxyuridine(34) in tRNA + S-adenosyl-L-homocysteine + H(+). Functionally, catalyzes carboxymethyl transfer from carboxy-S-adenosyl-L-methionine (Cx-SAM) to 5-hydroxyuridine (ho5U) to form 5-carboxymethoxyuridine (cmo5U) at position 34 in tRNAs. This Aeromonas hydrophila subsp. hydrophila (strain ATCC 7966 / DSM 30187 / BCRC 13018 / CCUG 14551 / JCM 1027 / KCTC 2358 / NCIMB 9240 / NCTC 8049) protein is tRNA U34 carboxymethyltransferase.